Consider the following 114-residue polypeptide: Iron-sulfur cluster insertion protein ErpA (114 aa).

The iron-sulfur cluster site is built by Cys42, Cys106, and Cys108.

The protein belongs to the HesB/IscA family. As to quaternary structure, homodimer. The cofactor is iron-sulfur cluster.

In terms of biological role, required for insertion of 4Fe-4S clusters for at least IspG. The chain is Iron-sulfur cluster insertion protein ErpA from Sodalis glossinidius (strain morsitans).